A 166-amino-acid polypeptide reads, in one-letter code: MTGIRSALPNPASLVESSTHRFLIFDAPNDDNLPLYINELKKYNVSHLVRACDPTYSTEPLQAIGIQVHDMPFADGGSPPDAVVNNWIKILGESYKKDSKETIGIHCVAGLGRAPVLVAIALIEGGMNPLQAVEYIRERRRGSINIKQIQYLKNYKSKKKSSCRIM.

A Tyrosine-protein phosphatase domain is found at 10–164 (NPASLVESST…YKSKKKSSCR (155 aa)). Cys52 and Cys107 form a disulfide bridge. Residue Asp75 is the Proton donor of the active site. Catalysis depends on Cys107, which acts as the Phosphocysteine intermediate. 108 to 113 (VAGLGR) is a phosphate binding site. Arg113 is a binding site for substrate. Cys163 bears the Cysteine methyl ester mark. A lipid anchor (S-farnesyl cysteine) is attached at Cys163. Residues 164–166 (RIM) constitute a propeptide, removed in mature form.

This sequence belongs to the protein-tyrosine phosphatase family.

It is found in the membrane. It catalyses the reaction O-phospho-L-tyrosyl-[protein] + H2O = L-tyrosyl-[protein] + phosphate. The polypeptide is Probable protein tyrosine phosphatase type IVA A (Dictyostelium discoideum (Social amoeba)).